A 979-amino-acid polypeptide reads, in one-letter code: Translation initiation factor IF-2 (979 aa).

Residues 68-386 are disordered; that stretch reads VKQKQGTPAS…DKRDAASRAA (319 aa). Basic and acidic residues-rich tracts occupy residues 102–179, 217–229, and 260–273; these read QDMR…KPEE, EMEK…EVFR, and TKED…DADG. Over residues 317 to 326 the composition is skewed to polar residues; that stretch reads RPAQQQSNAS. Positions 347–356 are enriched in basic and acidic residues; that stretch reads DVQRQVKETL. One can recognise a tr-type G domain in the interval 478-646; the sequence is ARPPIVTVMG…KVLLEADILE (169 aa). Positions 487–494 are G1; it reads GHVDHGKT. 487–494 lines the GTP pocket; that stretch reads GHVDHGKT. The G2 stretch occupies residues 512–516; that stretch reads GITQH. The G3 stretch occupies residues 534 to 537; that stretch reads DTPG. GTP contacts are provided by residues 534-538 and 588-591; these read DTPGH and NKID. Positions 588-591 are G4; sequence NKID. The segment at 624–626 is G5; the sequence is SAK.

It belongs to the TRAFAC class translation factor GTPase superfamily. Classic translation factor GTPase family. IF-2 subfamily.

It localises to the cytoplasm. One of the essential components for the initiation of protein synthesis. Protects formylmethionyl-tRNA from spontaneous hydrolysis and promotes its binding to the 30S ribosomal subunits. Also involved in the hydrolysis of GTP during the formation of the 70S ribosomal complex. The chain is Translation initiation factor IF-2 from Porphyromonas gingivalis (strain ATCC BAA-308 / W83).